Reading from the N-terminus, the 239-residue chain is Tetraspanin-9 (239 aa).

The Cytoplasmic segment spans residues 1–12; that stretch reads MARGCLCCVKYM. The chain crosses the membrane as a helical span at residues 13–33; the sequence is LFLFNLLFWLGGCGLLGVGVW. Topologically, residues 34–55 are extracellular; that stretch reads LSVSQGSFATLSPSFPSISAAN. A helical membrane pass occupies residues 56–76; that stretch reads LIITLGAVIMVTGFLGCLGAI. Residues 77 to 85 lie on the Cytoplasmic side of the membrane; that stretch reads KENKCLLLS. Residues 86-106 traverse the membrane as a helical segment; the sequence is FFITLLVILLAELILLILFFV. Topologically, residues 107–203 are extracellular; sequence YTDNVSENAR…VEEWLDDNKH (97 aa). N-linked (GlcNAc...) asparagine glycosylation is found at Asn110 and Asn180. A helical transmembrane segment spans residues 204–224; the sequence is LLGTIAMCVLVIQLLGMAFSM. The Cytoplasmic segment spans residues 225–239; sequence TLYQQIHRSGKKYEA.

Belongs to the tetraspanin (TM4SF) family.

Its subcellular location is the membrane. In Salmo salar (Atlantic salmon), this protein is Tetraspanin-9 (tspan9).